The sequence spans 135 residues: Transcription antitermination protein NusB (135 aa).

This sequence belongs to the NusB family.

Involved in transcription antitermination. Required for transcription of ribosomal RNA (rRNA) genes. Binds specifically to the boxA antiterminator sequence of the ribosomal RNA (rrn) operons. This is Transcription antitermination protein NusB from Clostridium perfringens (strain SM101 / Type A).